Reading from the N-terminus, the 394-residue chain is Probable cytosolic iron-sulfur protein assembly protein 1 (394 aa).

7 WD repeats span residues 10–49 (AHND…NFPL), 56–108 (AHKR…EQDS), 144–184 (GHEN…EEFE), 191–230 (DHQH…DDWS), 237–284 (GHGG…TEQI), 313–352 (IHKY…KWEI), and 359–394 (AHGV…IWEP).

It belongs to the WD repeat CIA1 family. As to quaternary structure, interacts with NAR1.

It is found in the cytoplasm. The protein localises to the nucleus. Functionally, essential component of the cytosolic iron-sulfur (Fe/S) protein assembly machinery. Required for the maturation of extramitochondrial Fe/S proteins. The polypeptide is Probable cytosolic iron-sulfur protein assembly protein 1 (Debaryomyces hansenii (strain ATCC 36239 / CBS 767 / BCRC 21394 / JCM 1990 / NBRC 0083 / IGC 2968) (Yeast)).